Here is a 60-residue protein sequence, read N- to C-terminus: Single-pass membrane and coiled-coil domain-containing protein 4 homolog (60 aa).

The segment at Met1–Glu21 is disordered. The span at Gln8–Glu21 shows a compositional bias: basic and acidic residues. A coiled-coil region spans residues Lys10 to Ile33. Residues Thr32–Lys52 traverse the membrane as a helical segment.

This sequence belongs to the SMCO4 family.

The protein localises to the membrane. In Aedes aegypti (Yellowfever mosquito), this protein is Single-pass membrane and coiled-coil domain-containing protein 4 homolog.